The following is a 188-amino-acid chain: MDLPKDKSDRTHQRINLNNSGTDRTNDLYLHIVQTFGCIETTATENATKLLMLGDVEVEISASSVSIEWTQKSMISQTIADSIVIMIIGLCASDKNVLSESELKERNHNVWKIQELQNLFREQFGDSFSIDEGIGKKENVKNGSVTIGKSKATIDFSTMKLIDCNSNPLKGRVESILSIGQKLTTPLC.

Component of the cleavage and polyadenylation factor (CPF) complex, which is composed of at least PTI1, SYC1, SSU72, GLC7, MPE1, REF2, PFS2, PTA1, YSH1/BRR5, SWD2, CFT2/YDH1, YTH1, CFT1/YHH1, FIP1 and PAP1. Component of the APT complex, which is a subcomplex of CPF, and is composed of PTI1, SYC1, SSU72, GLC7, REF2, PTA1 and SWD2.

Its subcellular location is the nucleus. In terms of biological role, component of the cleavage and polyadenylation factor (CPF) complex, which plays a key role in polyadenylation-dependent pre-mRNA 3'-end formation and cooperates with cleavage factors including the CFIA complex and NAB4/CFIB. Component of the APT complex, which may be involved in polyadenylation-independent transcript 3'-end formation, including snoRNAs and snRNAs. This Saccharomyces cerevisiae (strain ATCC 204508 / S288c) (Baker's yeast) protein is Protein SYC1 (SYC1).